The chain runs to 303 residues: Shikimate kinase 1, chloroplastic (303 aa).

The transit peptide at M1–S66 directs the protein to the chloroplast. G109 to T116 contacts ATP. T116 contributes to the Mg(2+) binding site. Residues D134, R159, and G181 each coordinate substrate. ATP is bound at residue R220.

Belongs to the shikimate kinase family. In terms of assembly, homodimer. It depends on Mg(2+) as a cofactor.

Its subcellular location is the plastid. It is found in the chloroplast. It catalyses the reaction shikimate + ATP = 3-phosphoshikimate + ADP + H(+). Its pathway is metabolic intermediate biosynthesis; chorismate biosynthesis; chorismate from D-erythrose 4-phosphate and phosphoenolpyruvate: step 5/7. Catalyzes the specific phosphorylation of the 3-hydroxyl group of shikimic acid using ATP as a cosubstrate. This chain is Shikimate kinase 1, chloroplastic (SK1), found in Arabidopsis thaliana (Mouse-ear cress).